The primary structure comprises 508 residues: Photosystem II CP47 reaction center protein (508 aa).

The next 6 helical transmembrane spans lie at 21-36 (SVHI…WAGS), 101-115 (IVFS…IWHW), 140-156 (GIHL…FGAF), 203-218 (IAAG…FHLS), 237-252 (VLSS…AFVV), and 457-472 (SFAL…HGAR).

Belongs to the PsbB/PsbC family. PsbB subfamily. PSII is composed of 1 copy each of membrane proteins PsbA, PsbB, PsbC, PsbD, PsbE, PsbF, PsbH, PsbI, PsbJ, PsbK, PsbL, PsbM, PsbT, PsbX, PsbY, PsbZ, Psb30/Ycf12, at least 3 peripheral proteins of the oxygen-evolving complex and a large number of cofactors. It forms dimeric complexes. It depends on Binds multiple chlorophylls. PSII binds additional chlorophylls, carotenoids and specific lipids. as a cofactor.

Its subcellular location is the plastid. It localises to the chloroplast thylakoid membrane. Functionally, one of the components of the core complex of photosystem II (PSII). It binds chlorophyll and helps catalyze the primary light-induced photochemical processes of PSII. PSII is a light-driven water:plastoquinone oxidoreductase, using light energy to abstract electrons from H(2)O, generating O(2) and a proton gradient subsequently used for ATP formation. The sequence is that of Photosystem II CP47 reaction center protein from Glycine max (Soybean).